Here is a 528-residue protein sequence, read N- to C-terminus: Phenylalanine--tRNA ligase alpha subunit (528 aa).

Thr365 and Phe444 together coordinate L-phenylalanine. Residue Glu446 coordinates Mg(2+). Phe469 provides a ligand contact to L-phenylalanine.

Belongs to the class-II aminoacyl-tRNA synthetase family. Phe-tRNA synthetase alpha subunit type 2 subfamily. In terms of assembly, tetramer of two alpha and two beta subunits. Mg(2+) serves as cofactor.

It is found in the cytoplasm. The enzyme catalyses tRNA(Phe) + L-phenylalanine + ATP = L-phenylalanyl-tRNA(Phe) + AMP + diphosphate + H(+). The chain is Phenylalanine--tRNA ligase alpha subunit from Borreliella burgdorferi (strain ATCC 35210 / DSM 4680 / CIP 102532 / B31) (Borrelia burgdorferi).